We begin with the raw amino-acid sequence, 240 residues long: MAPK-interacting and spindle-stabilizing protein-like (240 aa).

Positions Met1 to His240 are disordered. N-acetylserine is present on Ser2. Phosphoserine is present on residues Ser2, Ser6, and Ser15. The span at Pro16 to Lys26 shows a compositional bias: polar residues. Residues Trp34 to Pro43 show a composition bias toward low complexity. Composition is skewed to pro residues over residues Ser44 to Pro66, Ser74 to Pro122, Pro159 to Pro185, and Ala193 to Ala202.

This sequence belongs to the MISS family.

This chain is MAPK-interacting and spindle-stabilizing protein-like (MAPK1IP1L), found in Bos taurus (Bovine).